Consider the following 698-residue polypeptide: Cytochrome c oxidase subunit 1 (698 aa).

The chain crosses the membrane as a helical span at residues 65–85 (INYLYFSMVTGLSGAALATMI). A Ca(2+)-binding site is contributed by Glu-88. Fe(II)-heme a is bound at residue His-111. 8 consecutive transmembrane segments (helical) span residues 113–133 (LIMVFFVVVPILFGGFANFLI), 147–167 (LNSIGFWIQPCGYILLAKIGF), 304–324 (ILILSVVFAGISTTISFTNLL), 349–369 (IFLTLRMLATITPVLGAAVIM), 395–415 (LFWFFGHPEVYVLIIPTFGFI), 434–454 (IWAIYVMAYMGYLVWGHHMYL), 468–488 (ITIMISMPATIKVVNWTLSLV), and 498–518 (FLFSMSFLLLFLVAGFTGMWL). His-401 lines the Cu cation pocket. A cross-link (1'-histidyl-3'-tyrosine (His-Tyr)) is located at residues 401 to 405 (HPEVY). Residue Tyr-405 coordinates O2. Residues His-450 and His-451 each contribute to the Cu cation site. Residues His-528 and Asp-529 each coordinate Mg(2+). Transmembrane regions (helical) follow at residues 533 to 553 (VVAHFHIMLSGAAITGIFSGF), 574 to 594 (LIYYSGGQWVAFVPQFYLGFS), and 613 to 633 (MSTAGHFITLIGIMFFFLMIF). Heme a3 is bound at residue His-536. Residue His-538 coordinates Fe(II)-heme a.

It belongs to the heme-copper respiratory oxidase family. As to quaternary structure, component of the cytochrome c oxidase (complex IV, CIV), a multisubunit enzyme composed of a catalytic core of 3 subunits and several supernumerary subunits. The complex exists as a monomer or a dimer and forms supercomplexes (SCs) in the inner mitochondrial membrane with ubiquinol-cytochrome c oxidoreductase (cytochrome b-c1 complex, complex III, CIII). The cofactor is heme. Cu cation is required as a cofactor.

Its subcellular location is the mitochondrion inner membrane. It carries out the reaction 4 Fe(II)-[cytochrome c] + O2 + 8 H(+)(in) = 4 Fe(III)-[cytochrome c] + 2 H2O + 4 H(+)(out). Its pathway is energy metabolism; oxidative phosphorylation. Its function is as follows. Component of the cytochrome c oxidase, the last enzyme in the mitochondrial electron transport chain which drives oxidative phosphorylation. The respiratory chain contains 3 multisubunit complexes succinate dehydrogenase (complex II, CII), ubiquinol-cytochrome c oxidoreductase (cytochrome b-c1 complex, complex III, CIII) and cytochrome c oxidase (complex IV, CIV), that cooperate to transfer electrons derived from NADH and succinate to molecular oxygen, creating an electrochemical gradient over the inner membrane that drives transmembrane transport and the ATP synthase. Cytochrome c oxidase is the component of the respiratory chain that catalyzes the reduction of oxygen to water. Electrons originating from reduced cytochrome c in the intermembrane space (IMS) are transferred via the dinuclear copper A center (CU(A)) of subunit 2 and heme A of subunit 1 to the active site in subunit 1, a binuclear center (BNC) formed by heme A3 and copper B (CU(B)). The BNC reduces molecular oxygen to 2 water molecules using 4 electrons from cytochrome c in the IMS and 4 protons from the mitochondrial matrix. The chain is Cytochrome c oxidase subunit 1 (COI) from Tetrahymena pyriformis.